Reading from the N-terminus, the 312-residue chain is Olfactory receptor 1F1 (312 aa).

The Extracellular segment spans residues 1 to 25 (MSGTNQSSVSEFLLLGLSRQPQQQH). Asparagine 5 is a glycosylation site (N-linked (GlcNAc...) asparagine). A helical transmembrane segment spans residues 26 to 49 (LLFVFFLSMYLATVLGNLLIILSV). Residues 50–57 (SIDSCLHT) are Cytoplasmic-facing. The helical transmembrane segment at 58–79 (PMYFFLSNLSFVDICFSFTTVP) threads the bilayer. Topologically, residues 80–100 (KMLANHILETQTISFCGCLTQ) are extracellular. A disulfide bridge connects residues cysteine 97 and cysteine 189. A helical transmembrane segment spans residues 101-120 (MYFVFMFVDMDNFLLAVMAY). The Cytoplasmic portion of the chain corresponds to 121 to 139 (DHFVAVCHPLHYTAKMTHQ). The chain crosses the membrane as a helical span at residues 140–158 (LCALLVAGLWVVANLNVLL). The Extracellular segment spans residues 159–196 (HTLLMAPLSFCADNAITHFFCDVTPLLKLSCSDTHLNE). A helical membrane pass occupies residues 197 to 219 (VIILSEGALVMITPFLCILASYM). Over 220–236 (HITCTVLKVPSTKGRWK) the chain is Cytoplasmic. A helical transmembrane segment spans residues 237–259 (AFSTCGSHLAVVLLFYSTIIAVY). Residues 260 to 272 (FNPLSSHSAEKDT) are Extracellular-facing. The helical transmembrane segment at 273 to 292 (MATVLYTVVTPMLNPFIYSL) threads the bilayer. Residues 293–312 (RNRYLKGALKKVVGRVVFSV) lie on the Cytoplasmic side of the membrane.

It belongs to the G-protein coupled receptor 1 family.

It localises to the cell membrane. In terms of biological role, odorant receptor. In Homo sapiens (Human), this protein is Olfactory receptor 1F1 (OR1F1).